We begin with the raw amino-acid sequence, 225 residues long: Platelet-derived growth factor subunit B (225 aa).

A signal peptide spans 1–12 (LPLCCYLRLVSA). A propeptide spans 13-73 (EGDPIPEELY…ESESSSRGRR (61 aa)) (removed in mature form). A glycan (N-linked (GlcNAc...) asparagine) is linked at Asn55. 3 disulfide bridges follow: Cys89–Cys133, Cys122–Cys170, and Cys126–Cys172. Residues 183-225 (RSPGTSREHRAKTPQTRVTVRTVRIRRPPKGKHRKFKHTHDKK) constitute a propeptide, removed in mature form.

It belongs to the PDGF/VEGF growth factor family. Antiparallel homodimer; disulfide-linked. Antiparallel heterodimer with PDGFA; disulfide-linked. The PDGFB homodimer interacts with PDGFRA and PDGFRB homodimers, and with heterodimers formed by PDGFRA and PDGFRB. The heterodimer composed of PDGFA and PDGFB interacts with PDGFRB homodimers, and with heterodimers formed by PDGFRA and PDGFRB. Interacts with XLKD1. Interacts with LRP1. Interacts with SORL1 (via the N-terminal ectodomain). Interacts with CD82; this interaction inhibits PDGFB-mediated signaling pathway. Expressed in a distinct subpopulation of smooth muscle cells in injured arteries.

Its subcellular location is the secreted. Growth factor that plays an essential role in the regulation of embryonic development, cell proliferation, cell migration, survival and chemotaxis. Potent mitogen for cells of mesenchymal origin. Required for normal proliferation and recruitment of pericytes and vascular smooth muscle cells in the central nervous system, skin, lung, heart and placenta. Required for normal blood vessel development, and for normal development of kidney glomeruli. Plays an important role in wound healing. Signaling is modulated by the formation of heterodimers with PDGFA. The sequence is that of Platelet-derived growth factor subunit B (Pdgfb) from Rattus norvegicus (Rat).